Here is a 180-residue protein sequence, read N- to C-terminus: Signal peptidase complex subunit 2 (180 aa).

The Cytoplasmic segment spans residues 1 to 45; it reads MTDEPVKVVNKWDGPTVKNALDEVVKKILNDKVGWTESHNLMNLR. A helical membrane pass occupies residues 46–66; sequence LLISFIGVAFSAFACGYDYYE. Residues 67-72 are Lumenal-facing; it reads PFPKSK. The helical transmembrane segment at 73–93 threads the bilayer; sequence IVLAVCSVSYFICMGILQMYQ. Residues 94–180 lie on the Cytoplasmic side of the membrane; sequence WYVEKDCIYE…LYNRLIRSEQ (87 aa).

It belongs to the SPCS2 family. Component of the signal peptidase complex (SPC) composed of a catalytic subunit sec-11 and three accessory subunits spcs-1, spcs-2 and spcs-3. The complex induces a local thinning of the ER membrane which is used to measure the length of the signal peptide (SP) h-region of protein substrates. This ensures the selectivity of the complex towards h-regions shorter than 18-20 amino acids.

Its subcellular location is the endoplasmic reticulum membrane. Functionally, component of the signal peptidase complex (SPC) which catalyzes the cleavage of N-terminal signal sequences from nascent proteins as they are translocated into the lumen of the endoplasmic reticulum. Enhances the enzymatic activity of SPC and facilitates the interactions between different components of the translocation site. The polypeptide is Signal peptidase complex subunit 2 (Caenorhabditis elegans).